Consider the following 128-residue polypeptide: Sirohydrochlorin cobaltochelatase (128 aa).

The Proton acceptor role is filled by His9. His9 contacts Co(2+). Substrate contacts are provided by residues Lys43 and 68–73; that span reads FATGTH. His73 contributes to the Co(2+) binding site.

The protein belongs to the CbiX family. CbiXS subfamily. Homotetramer; dimer of dimers.

The catalysed reaction is Co-sirohydrochlorin + 2 H(+) = sirohydrochlorin + Co(2+). It functions in the pathway cofactor biosynthesis; adenosylcobalamin biosynthesis; cob(II)yrinate a,c-diamide from sirohydrochlorin (anaerobic route): step 1/10. Its function is as follows. Catalyzes the insertion of Co(2+) into sirohydrochlorin as part of the anaerobic pathway to cobalamin biosynthesis. The sequence is that of Sirohydrochlorin cobaltochelatase from Saccharolobus islandicus (strain Y.N.15.51 / Yellowstone #2) (Sulfolobus islandicus).